Reading from the N-terminus, the 158-residue chain is 6,7-dimethyl-8-ribityllumazine synthase (158 aa).

Residues Phe22, 56 to 58 (ALE), and 80 to 82 (VVI) each bind 5-amino-6-(D-ribitylamino)uracil. 85 to 86 (ET) provides a ligand contact to (2S)-2-hydroxy-3-oxobutyl phosphate. The active-site Proton donor is the His88. Asn113 contacts 5-amino-6-(D-ribitylamino)uracil. Arg127 is a (2S)-2-hydroxy-3-oxobutyl phosphate binding site.

This sequence belongs to the DMRL synthase family.

The catalysed reaction is (2S)-2-hydroxy-3-oxobutyl phosphate + 5-amino-6-(D-ribitylamino)uracil = 6,7-dimethyl-8-(1-D-ribityl)lumazine + phosphate + 2 H2O + H(+). It participates in cofactor biosynthesis; riboflavin biosynthesis; riboflavin from 2-hydroxy-3-oxobutyl phosphate and 5-amino-6-(D-ribitylamino)uracil: step 1/2. Its function is as follows. Catalyzes the formation of 6,7-dimethyl-8-ribityllumazine by condensation of 5-amino-6-(D-ribitylamino)uracil with 3,4-dihydroxy-2-butanone 4-phosphate. This is the penultimate step in the biosynthesis of riboflavin. This chain is 6,7-dimethyl-8-ribityllumazine synthase, found in Neisseria meningitidis serogroup C / serotype 2a (strain ATCC 700532 / DSM 15464 / FAM18).